Here is a 140-residue protein sequence, read N- to C-terminus: L-fucose mutarotase (140 aa).

His22 serves as the catalytic Proton donor. Residues Asp30, Arg107, and 129–131 (YGN) contribute to the substrate site.

It belongs to the RbsD / FucU family. FucU mutarotase subfamily. Homodecamer.

The protein localises to the cytoplasm. The enzyme catalyses alpha-L-fucose = beta-L-fucose. It functions in the pathway carbohydrate metabolism; L-fucose metabolism. In terms of biological role, involved in the anomeric conversion of L-fucose. This Salmonella typhimurium (strain LT2 / SGSC1412 / ATCC 700720) protein is L-fucose mutarotase.